The following is a 426-amino-acid chain: 3-phosphoshikimate 1-carboxyvinyltransferase (426 aa).

The 3-phosphoshikimate site is built by Lys21, Ser22, and Arg26. Position 21 (Lys21) interacts with phosphoenolpyruvate. Phosphoenolpyruvate contacts are provided by Gly91 and Arg119. 3-phosphoshikimate-binding residues include Ser162, Ser163, Gln164, Ser190, Asp304, and Lys331. Gln164 lines the phosphoenolpyruvate pocket. Residue Asp304 is the Proton acceptor of the active site. The phosphoenolpyruvate site is built by Arg335, Arg377, and Lys403.

It belongs to the EPSP synthase family. Monomer.

The protein localises to the cytoplasm. It carries out the reaction 3-phosphoshikimate + phosphoenolpyruvate = 5-O-(1-carboxyvinyl)-3-phosphoshikimate + phosphate. It functions in the pathway metabolic intermediate biosynthesis; chorismate biosynthesis; chorismate from D-erythrose 4-phosphate and phosphoenolpyruvate: step 6/7. In terms of biological role, catalyzes the transfer of the enolpyruvyl moiety of phosphoenolpyruvate (PEP) to the 5-hydroxyl of shikimate-3-phosphate (S3P) to produce enolpyruvyl shikimate-3-phosphate and inorganic phosphate. In Clostridium kluyveri (strain ATCC 8527 / DSM 555 / NBRC 12016 / NCIMB 10680 / K1), this protein is 3-phosphoshikimate 1-carboxyvinyltransferase.